A 363-amino-acid polypeptide reads, in one-letter code: Succinyl-diaminopimelate desuccinylase (363 aa).

His-63 contacts Zn(2+). Asp-65 is a catalytic residue. Residue Asp-94 participates in Zn(2+) binding. The active-site Proton acceptor is Glu-123. Zn(2+) contacts are provided by Glu-124, Glu-152, and His-337.

The protein belongs to the peptidase M20A family. DapE subfamily. In terms of assembly, homodimer. Zn(2+) serves as cofactor. Co(2+) is required as a cofactor.

It carries out the reaction N-succinyl-(2S,6S)-2,6-diaminopimelate + H2O = (2S,6S)-2,6-diaminopimelate + succinate. The protein operates within amino-acid biosynthesis; L-lysine biosynthesis via DAP pathway; LL-2,6-diaminopimelate from (S)-tetrahydrodipicolinate (succinylase route): step 3/3. Catalyzes the hydrolysis of N-succinyl-L,L-diaminopimelic acid (SDAP), forming succinate and LL-2,6-diaminopimelate (DAP), an intermediate involved in the bacterial biosynthesis of lysine and meso-diaminopimelic acid, an essential component of bacterial cell walls. This chain is Succinyl-diaminopimelate desuccinylase, found in Campylobacter concisus (strain 13826).